A 99-amino-acid polypeptide reads, in one-letter code: U1-theraphotoxin-Lsp1a (99 aa).

A signal peptide spans 1-23 (MRSLTLAALLLCSLLLVFHTSAA). A propeptide spanning residues 24–50 (AELEAQEGHLMIPGDTDTALETVDDER) is cleaved from the precursor. 4 cysteine pairs are disulfide-bonded: C54/C67, C58/C91, C72/C74, and C85/C96.

The protein belongs to the neurotoxin 12 (Hwtx-2) family. 04 (lasiotoxin) subfamily. Expressed by the venom gland.

The protein localises to the secreted. In terms of biological role, toxin that causes irreversible contractile paralysis into adult Aedes aegypti resulting in 100% mortality after 24 hours. The protein is U1-theraphotoxin-Lsp1a of Lasiodora sp. (strain IBSP 8539) (Brazilian salmon pink birdeater).